Reading from the N-terminus, the 229-residue chain is Methyltransferase ctvB (229 aa).

Belongs to the methyltransferase superfamily.

The protein operates within mycotoxin biosynthesis. Its function is as follows. Methyltransferase; part of the gene cluster that mediates the biosynthesis of citreoviridin, an inhibitor of the of F1-ATPase beta-subunit. The HR-PKS ctvA accepts acetyl-CoA as the starter unit and catalyzes eight iterations of malonyl-CoA extension and four iterations of SAM-dependent methylation at C4, C12, C14, and C16. The KR and DH domains selectively act on the first six iterations to generate the hexaene chain. In the last three iterations, the KR and DH domains terminate their functions to yield a beta,delta-diketo ester moiety, which then undergoes intramolecular cyclization to yield an alpha-pyrone intermediate. Subsequently, ctvB methylates the alpha-pyrone hydroxyl group to generate citreomontanin. In order to form the tetrahydrofuran ring with the correct stereochemistry, the terminal alkenes of citreomontanin need to undergo isomerization to yield a (17Z)-hexaene, a step that could be catalyzed by ctvC. The (17Z)-hexaene then undergoes bisepoxidation by ctvC to form a (17R,16R,15S,14R)-bisepoxide moiety. Lastly, ctvD acts as a regioselective hydrolase to form the tetrahydrofuran ring with the substituents in the correct absolute configuration, completing the biosynthesis of citreoviridin. This chain is Methyltransferase ctvB, found in Aspergillus terreus (strain NIH 2624 / FGSC A1156).